The primary structure comprises 352 residues: C-C chemokine receptor type 5 (352 aa).

Topologically, residues 1-30 (MDYQVSSPIYDINYYTSEPCQKINVKQIAA) are extracellular. Position 3 is a sulfotyrosine (Tyr3). Residues Ser6 and Ser7 are each glycosylated (O-linked (GalNAc...) serine). A sulfotyrosine mark is found at Tyr10, Tyr14, and Tyr15. 2 cysteine pairs are disulfide-bonded: Cys20-Cys269 and Cys101-Cys178. Residues 31-58 (RLLPPLYSLVFIFGFVGNMLVILILINC) form a helical membrane-spanning segment. At 59–68 (KRLKSMTDIY) the chain is on the cytoplasmic side. A helical membrane pass occupies residues 69 to 89 (LLNLAISDLFFLLTVPFWAHY). Residues 90–102 (AAAQWDFGNTMCQ) are Extracellular-facing. Residues 103–124 (LLTGLYFIGFFSGIFFIILLTI) form a helical membrane-spanning segment. At 125–141 (DRYLAVVHAVFALKART) the chain is on the cytoplasmic side. Residues 142–166 (VTFGVVTSVITWVVAVFASLPGIIF) form a helical membrane-spanning segment. Residues 167-198 (TRSQKEGLHYTCSSHFPYSQYQFWKNFQTLKI) lie on the Extracellular side of the membrane. The helical transmembrane segment at 199 to 218 (VILGLVLPLLVMVICYSGIL) threads the bilayer. Residues 219-235 (KTLLRCRNEKKRHRAVR) are Cytoplasmic-facing. Residues 236-260 (LIFTIMIVYFLFWAPYNIVLLLNTF) traverse the membrane as a helical segment. Over 261 to 277 (QEFFGLNNCSSSNRLDQ) the chain is Extracellular. Residues 278-301 (AMQVTETLGMTHCCINPIIYAFVG) form a helical membrane-spanning segment. Over 302–352 (EKFRNYLLVFFQKHIAKRFCKCCSIFQQEAPERASSVYTRSTGEQEISVGL) the chain is Cytoplasmic. S-palmitoyl cysteine attachment occurs at residues Cys321, Cys323, and Cys324. Phosphoserine; by BARK1 is present on residues Ser336, Ser337, Ser342, and Ser349.

The protein belongs to the G-protein coupled receptor 1 family. As to quaternary structure, interacts with PRAF2. Efficient ligand binding to CCL3/MIP-1alpha and CCL4/MIP-1beta requires sulfation, O-glycosylation and sialic acid modifications. Glycosylation on Ser-6 is required for efficient binding of CCL4. Interacts with GRK2. Interacts with ARRB1 and ARRB2. Interacts with CNIH4. Interacts with S100A4; this interaction stimulates T-lymphocyte chemotaxis. In terms of assembly, (Microbial infection) Interacts with HIV-1 surface protein gp120. (Microbial infection) May interact with human cytomegalovirus/HHV-5 protein UL78. In terms of processing, sulfated on at least 2 of the N-terminal tyrosines. Sulfation contributes to the efficiency of HIV-1 entry and is required for efficient binding of the chemokines, CCL3 and CCL4. Post-translationally, O-glycosylated, but not N-glycosylated. Ser-6 appears to be the major site even if Ser-7 may be also O-glycosylated. Also sialylated glycans present which contribute to chemokine binding. Thr-16 and Ser-17 may also be glycosylated and, if so, with small moieties such as a T-antigen. Palmitoylation in the C-terminal is important for cell surface expression, and to a lesser extent, for HIV entry. In terms of processing, phosphorylation on serine residues in the C-terminal is stimulated by binding CC chemokines especially by APO-RANTES. Highly expressed in spleen, thymus, in the myeloid cell line THP-1, in the promyeloblastic cell line KG-1a and on CD4+ and CD8+ T-cells. Medium levels in peripheral blood leukocytes and in small intestine. Low levels in ovary and lung.

Its subcellular location is the cell membrane. In terms of biological role, receptor for a number of inflammatory CC-chemokines including CCL3/MIP-1-alpha, CCL4/MIP-1-beta and RANTES and subsequently transduces a signal by increasing the intracellular calcium ion level. May play a role in the control of granulocytic lineage proliferation or differentiation. Participates in T-lymphocyte migration to the infection site by acting as a chemotactic receptor. (Microbial infection) Acts as a coreceptor (CD4 being the primary receptor) of human immunodeficiency virus-1/HIV-1. The sequence is that of C-C chemokine receptor type 5 from Homo sapiens (Human).